Consider the following 434-residue polypeptide: Serine/threonine transporter SstT (434 aa).

Helical transmembrane passes span 14–34 (IVIGIIVGAVLGVMVPSWSFI), 41–61 (FVGALKAIAPLLVFLLIMSAI), 72–92 (FGTVIVLYLSATLFSSIAAVA), 135–155 (ALVEGNYLAILFWSLLIGSGL), 172–192 (TVSAVAQNVIQFAPFGIVGLL), 210–230 (LLMLLVATMVFVYLVVYPFMV), 282–302 (ISIPLGGSANSGGAAITVSIM), 316–336 (IFLALLLCFLSAISATGVSGI), and 351–371 (FGISNDIAMQVVGIGFIIGVV). A disordered region spans residues 413 to 434 (GKGTAEVVTPEKTNEAEESEQV).

The protein belongs to the dicarboxylate/amino acid:cation symporter (DAACS) (TC 2.A.23) family.

It localises to the cell membrane. It catalyses the reaction L-serine(in) + Na(+)(in) = L-serine(out) + Na(+)(out). The catalysed reaction is L-threonine(in) + Na(+)(in) = L-threonine(out) + Na(+)(out). Its function is as follows. Involved in the import of serine and threonine into the cell, with the concomitant import of sodium (symport system). The sequence is that of Serine/threonine transporter SstT from Lacticaseibacillus casei (strain BL23) (Lactobacillus casei).